The primary structure comprises 780 residues: MEEEARPAVGDGEAATPARETPPAAPAQARAASGGVPESAPEPKRRQLGTLLQPTVNKFSLRVFGSHKAVEIEQERVKSAGAWIIHPYSDFRFYWDLIMLLLMVGNLIVLPVGITFFKEENSPPWIVFNVLSDTFFLLDLVLNFRTGIVVEEGAEILLAPRAIRTRYLRTWFLVDLISSIPVDYIFLVVELEPRLDAEVYKTARALRIVRFTKILSLLRLLRLSRLIRYMHQWEEIFHMTYDLASAVVRIFNLIGMMLLLCHWDGCLQFLVPMLQDFPSDCWVSMNRMVNHSWGRQYSHALFKAMSHMLCIGYGQQAPVGMPDVWLTMLSMIVGATCYAMFIGHATALIQSLDSSRRQYQEKYKQVEQYMSFHKLPADTRQRIHEYYEHRYQGKMFDEESILGELSEPLREEIINFTCRGLVAHMPLFAHADPSFVTAVLTKLRFEVFQPGDLVVREGSVGRKMYFIQHGLLSVLARGARDTRLTDGSYFGEICLLTRGRRTASVRADTYCRLYSLSVDHFNAVLEEFPMMRRAFETVAMDRLRRIGKKNSILQRKRSEPSPGSSSGGVMEQHLVQHDRDMARGIRGLAPGTGARLSGKPVLWEPLVHAPLQAAAVTSNVAIALTHQRGPLPLSPDSPATLLARSARRSAGSPASPLVPVRAGPLLARGPWASTSRLPAPPARTLHASLSRTGRSQVSLLGPPPGGGGRRLGPRGRPLSASQPSLPQRATGDGSPRRKGSGSERLPPSGLLAKPPGTVQPSRSSVPEPVTPRGPQISANM.

Residues 1–47 (MEEEARPAVGDGEAATPARETPPAAPAQARAASGGVPESAPEPKRRQ) form a disordered region. The Cytoplasmic portion of the chain corresponds to 1–96 (MEEEARPAVG…PYSDFRFYWD (96 aa)). Residues 13–32 (EAATPARETPPAAPAQARAA) are compositionally biased toward low complexity. The tract at residues 45 to 90 (RRQLGTLLQPTVNKFSLRVFGSHKAVEIEQERVKSAGAWIIHPYSD) is involved in subunit assembly. Residues 97–117 (LIMLLLMVGNLIVLPVGITFF) form a helical membrane-spanning segment. Residues 118 to 123 (KEENSP) lie on the Extracellular side of the membrane. Residues 124 to 144 (PWIVFNVLSDTFFLLDLVLNF) form a helical membrane-spanning segment. Residues 145-170 (RTGIVVEEGAEILLAPRAIRTRYLRT) lie on the Cytoplasmic side of the membrane. The helical transmembrane segment at 171 to 191 (WFLVDLISSIPVDYIFLVVEL) threads the bilayer. Topologically, residues 192 to 200 (EPRLDAEVY) are extracellular. The chain crosses the membrane as a helical; Voltage-sensor span at residues 201–221 (KTARALRIVRFTKILSLLRLL). Residues 222–252 (RLSRLIRYMHQWEEIFHMTYDLASAVVRIFN) lie on the Cytoplasmic side of the membrane. Residues 253 to 273 (LIGMMLLLCHWDGCLQFLVPM) form a helical membrane-spanning segment. The Extracellular segment spans residues 274–296 (LQDFPSDCWVSMNRMVNHSWGRQ). The N-linked (GlcNAc...) asparagine glycan is linked to Asn-290. Positions 297-318 (YSHALFKAMSHMLCIGYGQQAP) form an intramembrane region, pore-forming. Residues 319-328 (VGMPDVWLTM) are Extracellular-facing. The chain crosses the membrane as a helical span at residues 329–349 (LSMIVGATCYAMFIGHATALI). The Cytoplasmic segment spans residues 350-780 (QSLDSSRRQY…PRGPQISANM (431 aa)). The interval 353 to 780 (DSSRRQYQEK…PRGPQISANM (428 aa)) is interaction with KCTD3. Residues Gly-491, Glu-492, Cys-494, Arg-501, Thr-502, Arg-542, and Arg-545 each coordinate 3',5'-cyclic AMP. A disordered region spans residues 549-569 (KNSILQRKRSEPSPGSSSGGV). Ser-634 bears the Phosphoserine mark. Residues 687–698 (ASLSRTGRSQVS) show a composition bias toward polar residues. Positions 687-780 (ASLSRTGRSQ…PRGPQISANM (94 aa)) are disordered.

It belongs to the potassium channel HCN family. In terms of assembly, homotetramer. The potassium channel is composed of a homo- or heterotetrameric complex of pore-forming subunits. Interacts with HCN1. Interacts with KCTD3; this interaction increases cell surface expression and current density of this channel. Interacts with PEX5L.

It is found in the cell membrane. It catalyses the reaction K(+)(in) = K(+)(out). It carries out the reaction Na(+)(in) = Na(+)(out). Its activity is regulated as follows. Inhibited by Cs(1+) and ivabradine. Unlike HCN2 and HCN4, HCN3 is insensitive to cyclic nucleotides, such as cAMP or cGMP. This lack of sensitivity of HCN3, despite harboring a functional cyclic nucleotide-binding domain (CNBD), may be explained by its shorter C-terminal sequence, which may alter the normal autoinhibition of the channel. Phosphatidylinositol-4,5-bisphosphate (PIP(2)) shifts HCN3 activation to more depolarized potentials and accelerated activation kinetics. Its function is as follows. Hyperpolarization-activated ion channel that are permeable to sodium and potassium ions, with an about 3:1 preference for potassium ions. Contributes to the native pacemaker currents in heart (If) and in neurons (Ih). In particular, plays a pivotal role in maintaining excitability and promoting rhythmic burst firing within hypothalamic nuclei. Exerts a significant influence on the configuration of the cardiac action potential waveform. Does not appear to play a prominent role in the processing of acute, neuropathic, or inflammatory pain. The polypeptide is Potassium/sodium hyperpolarization-activated cyclic nucleotide-gated channel 3 (Hcn3) (Rattus norvegicus (Rat)).